The sequence spans 244 residues: Transmembrane protein 176A (244 aa).

Residue Ser-42 is modified to Phosphoserine. The next 4 helical transmembrane spans lie at 60-80 (VLVA…VLGG), 92-112 (SEGA…VAFL), 122-142 (ALMR…AIVI), and 204-224 (LLGI…VYIW).

Belongs to the TMEM176 family. Interacts with MCOLN2. As to expression, specifically expressed in lung, kidney and spleen.

The protein localises to the membrane. The sequence is that of Transmembrane protein 176A (Tmem176a) from Mus musculus (Mouse).